Consider the following 659-residue polypeptide: Methionine--tRNA ligase (659 aa).

The short motif at 13–23 (YYPSGNLHIGH) is the 'HIGH' region element. The 'KMSKS' region signature appears at 308-312 (KMSKS). Lys-311 provides a ligand contact to ATP. Residues 559 to 659 (DFDKVEIKAA…SAIPNGAVIK (101 aa)) enclose the tRNA-binding domain.

The protein belongs to the class-I aminoacyl-tRNA synthetase family. MetG type 2B subfamily. In terms of assembly, homodimer.

The protein localises to the cytoplasm. The enzyme catalyses tRNA(Met) + L-methionine + ATP = L-methionyl-tRNA(Met) + AMP + diphosphate. In terms of biological role, is required not only for elongation of protein synthesis but also for the initiation of all mRNA translation through initiator tRNA(fMet) aminoacylation. The polypeptide is Methionine--tRNA ligase (Staphylococcus haemolyticus (strain JCSC1435)).